The sequence spans 334 residues: Stabilizer of axonemal microtubules 3 (334 aa).

Disordered stretches follow at residues 81–105 (AYVP…PTRT), 128–153 (YQSS…YFGP), and 233–260 (QVWS…RVPR). The span at 128-141 (YQSSETRAQYTGSP) shows a compositional bias: polar residues. The segment covering 240 to 251 (QRPPCPRSSRPP) has biased composition (pro residues).

The polypeptide is Stabilizer of axonemal microtubules 3 (Homo sapiens (Human)).